A 248-amino-acid polypeptide reads, in one-letter code: Ribosomal RNA small subunit methyltransferase J (248 aa).

Residues 101 to 102 (RD), 117 to 118 (ER), 153 to 154 (SS), and aspartate 171 each bind S-adenosyl-L-methionine.

The protein belongs to the methyltransferase superfamily. RsmJ family.

It localises to the cytoplasm. It carries out the reaction guanosine(1516) in 16S rRNA + S-adenosyl-L-methionine = N(2)-methylguanosine(1516) in 16S rRNA + S-adenosyl-L-homocysteine + H(+). In terms of biological role, specifically methylates the guanosine in position 1516 of 16S rRNA. The chain is Ribosomal RNA small subunit methyltransferase J from Pectobacterium atrosepticum (strain SCRI 1043 / ATCC BAA-672) (Erwinia carotovora subsp. atroseptica).